The chain runs to 125 residues: Small ribosomal subunit protein uS12c (125 aa).

It belongs to the universal ribosomal protein uS12 family. As to quaternary structure, part of the 30S ribosomal subunit.

Its subcellular location is the plastid. Functionally, with S4 and S5 plays an important role in translational accuracy. Located at the interface of the 30S and 50S subunits. In Euglena longa (Euglenophycean alga), this protein is Small ribosomal subunit protein uS12c (rps12).